The primary structure comprises 255 residues: Pyridoxine 5'-phosphate synthase (255 aa).

A 3-amino-2-oxopropyl phosphate-binding site is contributed by Asn6. 8 to 9 (DH) contributes to the 1-deoxy-D-xylulose 5-phosphate binding site. Arg17 is a 3-amino-2-oxopropyl phosphate binding site. His41 (proton acceptor) is an active-site residue. Residues Arg43 and His48 each coordinate 1-deoxy-D-xylulose 5-phosphate. Glu68 (proton acceptor) is an active-site residue. Position 96 (Thr96) interacts with 1-deoxy-D-xylulose 5-phosphate. His208 (proton donor) is an active-site residue. 3-amino-2-oxopropyl phosphate-binding positions include Gly209 and 230 to 231 (GQ).

It belongs to the PNP synthase family. Homooctamer; tetramer of dimers.

The protein resides in the cytoplasm. It catalyses the reaction 3-amino-2-oxopropyl phosphate + 1-deoxy-D-xylulose 5-phosphate = pyridoxine 5'-phosphate + phosphate + 2 H2O + H(+). Its pathway is cofactor biosynthesis; pyridoxine 5'-phosphate biosynthesis; pyridoxine 5'-phosphate from D-erythrose 4-phosphate: step 5/5. In terms of biological role, catalyzes the complicated ring closure reaction between the two acyclic compounds 1-deoxy-D-xylulose-5-phosphate (DXP) and 3-amino-2-oxopropyl phosphate (1-amino-acetone-3-phosphate or AAP) to form pyridoxine 5'-phosphate (PNP) and inorganic phosphate. The polypeptide is Pyridoxine 5'-phosphate synthase (Campylobacter lari (strain RM2100 / D67 / ATCC BAA-1060)).